Consider the following 441-residue polypeptide: Tol-Pal system protein TolB (441 aa).

The N-terminal stretch at 1 to 39 (MPTMTPAFSRASLSEALRSYGLALLLFLATLLAWQPAHA) is a signal peptide.

This sequence belongs to the TolB family. The Tol-Pal system is composed of five core proteins: the inner membrane proteins TolA, TolQ and TolR, the periplasmic protein TolB and the outer membrane protein Pal. They form a network linking the inner and outer membranes and the peptidoglycan layer.

It is found in the periplasm. Functionally, part of the Tol-Pal system, which plays a role in outer membrane invagination during cell division and is important for maintaining outer membrane integrity. The sequence is that of Tol-Pal system protein TolB from Bordetella avium (strain 197N).